The chain runs to 625 residues: tRNA (uracil-5-)-methyltransferase homolog A (625 aa).

Disordered regions lie at residues 1–37 (MSEN…AAPA) and 145–165 (RPKA…EPPV). Residues 27-37 (PTVSVPPAAPA) show a composition bias toward low complexity. The 74-residue stretch at 73 to 146 (FKLELQNVPR…RPLSVRLARP (74 aa)) folds into the RRM domain. Residues 180–209 (YAEQLERKQLECEQVLQKLAKEIGSTNRAL) are a coiled coil. Phosphoserine is present on Ser378. S-adenosyl-L-methionine contacts are provided by Gln411, Glu461, and Asp510. Cys538 functions as the Nucleophile in the catalytic mechanism. Glu581 acts as the Proton acceptor in catalysis. The disordered stretch occupies residues 594-625 (GTGVLGPHSPPAQPTPGPPDNTLQETGTFPSS). A compositionally biased stretch (pro residues) spans 601–612 (HSPPAQPTPGPP). Phosphoserine is present on Ser602. Polar residues predominate over residues 614 to 625 (NTLQETGTFPSS).

It belongs to the class I-like SAM-binding methyltransferase superfamily. RNA M5U methyltransferase family.

The protein resides in the cytoplasm. It is found in the cytosol. It carries out the reaction uridine(54) in tRNA + S-adenosyl-L-methionine = 5-methyluridine(54) in tRNA + S-adenosyl-L-homocysteine + H(+). The enzyme catalyses a uridine in mRNA + S-adenosyl-L-methionine = a 5-methyluridine in mRNA + S-adenosyl-L-homocysteine + H(+). Its function is as follows. S-adenosyl-L-methionine-dependent methyltransferase that catalyzes the formation of 5-methyl-uridine in tRNAs and some mRNAs. Mainly catalyzes the methylation of uridine at position 54 (m5U54) in cytosolic tRNAs. Also able to mediate the formation of 5-methyl-uridine in some mRNAs. This chain is tRNA (uracil-5-)-methyltransferase homolog A, found in Homo sapiens (Human).